Consider the following 333-residue polypeptide: Dehydrodolichyl diphosphate synthase complex subunit Dhdds (333 aa).

Asp-34, Gly-35, Arg-37, Arg-38, and Arg-85 together coordinate (2E,6E)-farnesyl diphosphate. Residue Asp-34 participates in Mg(2+) binding. Isopentenyl diphosphate is bound by residues Arg-38, Arg-85, Arg-205, Arg-211, and Ser-213.

Belongs to the UPP synthase family. As to quaternary structure, the active dehydrodolichyl diphosphate synthase complex is a heterotetramer composed of a dimer of heterodimer of DHDDS and NUS1. Interacts with NPC2. It depends on Mg(2+) as a cofactor.

It localises to the endoplasmic reticulum membrane. It catalyses the reaction n isopentenyl diphosphate + (2E,6E)-farnesyl diphosphate = a di-trans,poly-cis-polyprenyl diphosphate + n diphosphate. Its pathway is protein modification; protein glycosylation. It functions in the pathway lipid metabolism. In terms of biological role, with NUS1, forms the dehydrodolichyl diphosphate synthase (DDS) complex, an essential component of the dolichol monophosphate (Dol-P) biosynthetic machinery. Both subunits contribute to enzymatic activity, i.e. condensation of multiple copies of isopentenyl pyrophosphate (IPP) to farnesyl pyrophosphate (FPP) to produce dehydrodolichyl diphosphate (Dedol-PP), a precursor of dolichol phosphate which is utilized as a sugar carrier in protein glycosylation in the endoplasmic reticulum (ER). Synthesizes long-chain polyprenols, mostly of C95 and C100 chain length. Regulates the glycosylation and stability of nascent NPC2, thereby promoting trafficking of LDL-derived cholesterol. This Mus musculus (Mouse) protein is Dehydrodolichyl diphosphate synthase complex subunit Dhdds.